The sequence spans 507 residues: FLYWCH transcription factor 1 (507 aa).

Over residues 1–26 (MYSPESMNSNISSPSPPSSSSLNAPS) the composition is skewed to low complexity. Residues 1–51 (MYSPESMNSNISSPSPPSSSSLNAPSLADAPEVRSDDGEAETSEPSTSVTA) are disordered. An FLYWCH-type zinc finger spans residues 135 to 192 (KKTRLKVFSNGFFMTFDKLSSCQKKYFWRCEYKNTCKARMHTDIVTEKILTFIHEHNH).

Its function is as follows. Probable transcription factor. Binds to the DNA sequence motif 5'-[AG]GGCGCCG-3' in the promoters of target genes, including micro-RNA genes, in order to repress expression, and acting redundantly with flh-2. The protein is FLYWCH transcription factor 1 of Caenorhabditis elegans.